A 294-amino-acid chain; its full sequence is HTH-type transcriptional regulator DgdR (294 aa).

The HTH lysR-type domain occupies Leu-14 to Leu-70. The H-T-H motif DNA-binding region spans Leu-31 to Lys-50.

The protein belongs to the LysR transcriptional regulatory family.

This Burkholderia cepacia (Pseudomonas cepacia) protein is HTH-type transcriptional regulator DgdR (dgdR).